The sequence spans 213 residues: Large ribosomal subunit protein uL1 (213 aa).

Belongs to the universal ribosomal protein uL1 family. In terms of assembly, part of the 50S ribosomal subunit.

In terms of biological role, probably involved in E site tRNA release. Binds directly to 23S rRNA. Functionally, protein L1 is also a translational repressor protein, it controls the translation of its operon by binding to its mRNA. The chain is Large ribosomal subunit protein uL1 from Methanothermococcus thermolithotrophicus (Methanococcus thermolithotrophicus).